Here is a 480-residue protein sequence, read N- to C-terminus: Probable pectin lyase F-2 (480 aa).

Positions 1-25 are cleaved as a signal peptide; it reads MTLIRTVLMAAALLGASAHAQGVVG. An intrachain disulfide couples cysteine 83 to cysteine 106. N-linked (GlcNAc...) asparagine glycosylation is present at asparagine 111. Arginine 256 is a catalytic residue. Cysteine 322 and cysteine 330 are oxidised to a cystine. Low complexity predominate over residues 386-401; the sequence is SSSAIPSSTPAPSSSA. A disordered region spans residues 386–436; the sequence is SSSAIPSSTPAPSSSALAKRHGGHDRHGLGHIPHLTEGGPGAWHTPGPAPS.

The protein belongs to the polysaccharide lyase 1 family.

The protein localises to the secreted. The catalysed reaction is Eliminative cleavage of (1-&gt;4)-alpha-D-galacturonan methyl ester to give oligosaccharides with 4-deoxy-6-O-methyl-alpha-D-galact-4-enuronosyl groups at their non-reducing ends.. Pectinolytic enzymes consist of four classes of enzymes: pectin lyase, polygalacturonase, pectin methylesterase and rhamnogalacturonase. Among pectinolytic enzymes, pectin lyase is the most important in depolymerization of pectin, since it cleaves internal glycosidic bonds of highly methylated pectins. The protein is Probable pectin lyase F-2 (pelF-2) of Aspergillus terreus (strain NIH 2624 / FGSC A1156).